A 193-amino-acid polypeptide reads, in one-letter code: Nucleoside triphosphate pyrophosphatase (193 aa).

D70 (proton acceptor) is an active-site residue.

The protein belongs to the Maf family. It depends on a divalent metal cation as a cofactor.

The protein localises to the cytoplasm. The enzyme catalyses a ribonucleoside 5'-triphosphate + H2O = a ribonucleoside 5'-phosphate + diphosphate + H(+). It carries out the reaction a 2'-deoxyribonucleoside 5'-triphosphate + H2O = a 2'-deoxyribonucleoside 5'-phosphate + diphosphate + H(+). Functionally, nucleoside triphosphate pyrophosphatase. May have a dual role in cell division arrest and in preventing the incorporation of modified nucleotides into cellular nucleic acids. The chain is Nucleoside triphosphate pyrophosphatase from Anaplasma phagocytophilum (strain HZ).